A 518-amino-acid polypeptide reads, in one-letter code: Probable cyclic di-GMP phosphodiesterase PdeN (518 aa).

2 helical membrane-spanning segments follow: residues 16-36 (CIVA…LVAW) and 236-256 (VWYA…LCYY). The region spanning 261–514 (RMRPGREIMT…DFVRWLKKPY (254 aa)) is the EAL domain.

It localises to the cell inner membrane. It catalyses the reaction 3',3'-c-di-GMP + H2O = 5'-phosphoguanylyl(3'-&gt;5')guanosine + H(+). Phosphodiesterase (PDE) that catalyzes the hydrolysis of cyclic-di-GMP (c-di-GMP) to 5'-pGpG. This chain is Probable cyclic di-GMP phosphodiesterase PdeN, found in Escherichia coli (strain K12).